Reading from the N-terminus, the 457-residue chain is Siroheme synthase (457 aa).

Residues 1-204 (MDHLPIFCQL…ADEKAVNATT (204 aa)) are precorrin-2 dehydrogenase /sirohydrochlorin ferrochelatase. Residues 22 to 23 (DV) and 43 to 44 (LT) contribute to the NAD(+) site. At Ser128 the chain carries Phosphoserine. The segment at 216–457 (GEVVLVGAGP…RDKLNWFSNY (242 aa)) is uroporphyrinogen-III C-methyltransferase. Pro225 is an S-adenosyl-L-methionine binding site. The Proton acceptor role is filled by Asp248. The active-site Proton donor is Lys270. S-adenosyl-L-methionine is bound by residues 301-303 (GGD), Ile306, 331-332 (TA), Met382, and Gly411.

This sequence in the N-terminal section; belongs to the precorrin-2 dehydrogenase / sirohydrochlorin ferrochelatase family. In the C-terminal section; belongs to the precorrin methyltransferase family.

The enzyme catalyses uroporphyrinogen III + 2 S-adenosyl-L-methionine = precorrin-2 + 2 S-adenosyl-L-homocysteine + H(+). The catalysed reaction is precorrin-2 + NAD(+) = sirohydrochlorin + NADH + 2 H(+). It catalyses the reaction siroheme + 2 H(+) = sirohydrochlorin + Fe(2+). It functions in the pathway cofactor biosynthesis; adenosylcobalamin biosynthesis; precorrin-2 from uroporphyrinogen III: step 1/1. Its pathway is cofactor biosynthesis; adenosylcobalamin biosynthesis; sirohydrochlorin from precorrin-2: step 1/1. It participates in porphyrin-containing compound metabolism; siroheme biosynthesis; precorrin-2 from uroporphyrinogen III: step 1/1. The protein operates within porphyrin-containing compound metabolism; siroheme biosynthesis; siroheme from sirohydrochlorin: step 1/1. It functions in the pathway porphyrin-containing compound metabolism; siroheme biosynthesis; sirohydrochlorin from precorrin-2: step 1/1. Multifunctional enzyme that catalyzes the SAM-dependent methylations of uroporphyrinogen III at position C-2 and C-7 to form precorrin-2 via precorrin-1. Then it catalyzes the NAD-dependent ring dehydrogenation of precorrin-2 to yield sirohydrochlorin. Finally, it catalyzes the ferrochelation of sirohydrochlorin to yield siroheme. The polypeptide is Siroheme synthase (Salmonella gallinarum (strain 287/91 / NCTC 13346)).